Here is a 426-residue protein sequence, read N- to C-terminus: Protein prenyltransferase alpha subunit repeat-containing protein 1 (426 aa).

PFTA repeat units follow at residues 86 to 119 (ALVD…VLNP), 121 to 154 (KDLY…QKEC), 180 to 213 (EEMR…AKGN), and 219 to 252 (DELS…AKEL). A disordered region spans residues 255-279 (AAEKDVHTSQQPNGENTATASDDNH). The segment covering 262–275 (TSQQPNGENTATAS) has biased composition (polar residues). The stretch at 290–323 (EEIQLCTDLIESYPGHETLWCHRRHVFYLWHQWR) is one PFTA 5 repeat.

The protein belongs to the protein prenyltransferase subunit alpha family.

The chain is Protein prenyltransferase alpha subunit repeat-containing protein 1 (ptar1) from Danio rerio (Zebrafish).